We begin with the raw amino-acid sequence, 414 residues long: MATHSSRSENKDAGEEDELRRRNPYEVLGIPSNSTDQEIKSAYRRMALRYHPDKNPDDPVAAEMFKEVTFAYEVLSDPENRRLYDTTGSEAVGPENEDLELDLSSLGAVNTIFAALFNKLGVQIKTTVSANLLGEALNGTVTTLPLMVGQVVSRKVEKQSAHFYSVTLTEEEAQDGLICKVHSSAKNKFKLLYFDQVENGGLSLALQEDSRKTGKLSTAGLYFFGFPVYRFDHRVNSRALSRDPETGFFKRLDAFQPFEITELKAGSHVFAVYGDNFFKSVSYTLEIFSSAPFGNEKESLRSTEAQIVSKRTELLKFEAEYHEVFAQFTEMASKCTGEVQEIDELLKRRNEICAAYTIFPPTKQGSSKSRSWSKKKSSLLMEPREEGEVAVREEGGVKKKKWYNIQLRQDKKKN.

Basic and acidic residues predominate over residues 1-24 (MATHSSRSENKDAGEEDELRRRNP). Positions 1–36 (MATHSSRSENKDAGEEDELRRRNPYEVLGIPSNSTD) are disordered. Positions 23–88 (NPYEVLGIPS…ENRRLYDTTG (66 aa)) constitute a J domain. The stretch at 296-324 (EKESLRSTEAQIVSKRTELLKFEAEYHEV) forms a coiled coil. A disordered region spans residues 362 to 395 (TKQGSSKSRSWSKKKSSLLMEPREEGEVAVREEG). Over residues 382–395 (EPREEGEVAVREEG) the composition is skewed to basic and acidic residues.

It belongs to the DnaJ family. C/III subfamily. In terms of tissue distribution, expressed constitutively at low levels in seedlings, roots, leaves, stems, flowers and siliques.

The protein resides in the membrane. Its function is as follows. Plays a continuous role in plant development probably in the structural organization of compartments. Seems to be involved in early gravitropic signal transduction within the gravity-perceiving cells (statocytes). This chain is Chaperone protein dnaJ 39 (ATJ39), found in Arabidopsis thaliana (Mouse-ear cress).